We begin with the raw amino-acid sequence, 167 residues long: T-cell surface glycoprotein CD3 delta chain (167 aa).

An N-terminal signal peptide occupies residues 1–21 (MEHSRCLSCLILAALLSQVNP). Over 22–100 (RALEVLEAED…NCVELDSATL (79 aa)) the chain is Extracellular. A disulfide bridge connects residues C37 and C73. Residues N38 and N55 are each glycosylated (N-linked (GlcNAc...) asparagine). A helical membrane pass occupies residues 101–121 (AGLIITDIIATVLLALGVYCF). The Cytoplasmic portion of the chain corresponds to 122-167 (AGHETGRFSRAADTQVLMGNDQLYQPLRERNDAQYSRLGDKWARNK). The 29-residue stretch at 134-162 (DTQVLMGNDQLYQPLRERNDAQYSRLGDK) folds into the ITAM domain. Phosphotyrosine occurs at positions 145 and 156.

The TCR-CD3 complex is composed of a CD3D/CD3E and a CD3G/CD3E heterodimers that preferentially associate with TCRalpha and TCRbeta, respectively, to form TCRalpha/CD3E/CD3G and TCRbeta/CD3G/CD3E trimers. In turn, the hexamer interacts with CD3Z homodimer to form the TCR-CD3 complex. Alternatively, TCRalpha and TCRbeta can be replaced by TCRgamma and TCRdelta. Interacts with coreceptors CD4 and CD8. In terms of processing, phosphorylated on Tyr residues after T-cell receptor triggering by LCK in association with CD4/CD8. In terms of tissue distribution, CD3D is mostly present on T-lymphocytes with its TCR-CD3 partners. Present also in fetal NK-cells.

The protein resides in the cell membrane. Functionally, part of the TCR-CD3 complex present on T-lymphocyte cell surface that plays an essential role in adaptive immune response. When antigen presenting cells (APCs) activate T-cell receptor (TCR), TCR-mediated signals are transmitted across the cell membrane by the CD3 chains CD3D, CD3E, CD3G and CD3Z. All CD3 chains contain immunoreceptor tyrosine-based activation motifs (ITAMs) in their cytoplasmic domain. Upon TCR engagement, these motifs become phosphorylated by Src family protein tyrosine kinases LCK and FYN, resulting in the activation of downstream signaling pathways. In addition of this role of signal transduction in T-cell activation, CD3D plays an essential role in thymocyte differentiation. Indeed, participates in correct intracellular TCR-CD3 complex assembly and surface expression. In absence of a functional TCR-CD3 complex, thymocytes are unable to differentiate properly. Interacts with CD4 and CD8 and thus serves to establish a functional link between the TCR and coreceptors CD4 and CD8, which is needed for activation and positive selection of CD4 or CD8 T-cells. This chain is T-cell surface glycoprotein CD3 delta chain (CD3D), found in Ovis aries (Sheep).